We begin with the raw amino-acid sequence, 396 residues long: L-aspartate--glyoxylate aminotransferase (396 aa).

At K196 the chain carries N6-(pyridoxal phosphate)lysine.

The protein belongs to the class-V pyridoxal-phosphate-dependent aminotransferase family. Requires pyridoxal 5'-phosphate as cofactor.

It carries out the reaction oxaloacetate + glycine = glyoxylate + L-aspartate. Functionally, catalyzes the transamination of glyoxylate into glycine using L-aspartate as the preferred amino group donor. Is essential for the growth of P.denitrificans in the presence of glycolate and glyoxylate since it functions in glyoxylate assimilation via the beta-hydroxyaspartate cycle (BHAC). Can catalyze the reverse reaction in vitro, and also use L-serine and L-glutamate as amino group donor, but with much less efficiency than L-aspartate. This Paracoccus denitrificans (strain Pd 1222) protein is L-aspartate--glyoxylate aminotransferase.